The sequence spans 554 residues: Malate synthase 1 (554 aa).

Arginine 177 (proton acceptor) is an active-site residue. Catalysis depends on aspartate 457, which acts as the Proton donor. The SKL peroxisome targeting motif motif lies at 552–554; the sequence is SKL.

It belongs to the malate synthase family. As to quaternary structure, interacts with PEX9.

It is found in the peroxisome matrix. The catalysed reaction is glyoxylate + acetyl-CoA + H2O = (S)-malate + CoA + H(+). It functions in the pathway carbohydrate metabolism; glyoxylate cycle; (S)-malate from isocitrate: step 2/2. Functionally, malate synthase which takes part in the glyoxylate cycle. MLS1 activity is essential for cells to grow on oleic acid as a sole carbon source. Two steps of the glyoxylate cycle take place in the cytosol, the splitting of isocitrate into succinate and glyoxylate, and the dehydrogenation of malate to oxaloacetate. However, the formation of malate from glyoxylate and acetyl-CoA undertaken MLS1, occurs in the peroxisomes when cells are grown on oleic acid. The source of acetyl-CoA being either peroxisomal when breaking down fatty acids, or cytosolic when extra-cellular two-carbon substrates are used, therefore, although not strictly essential, the peroxisomal localization of MLS1 appears to be advantageous for cells growing on oleic acid, in that acetyl-CoA production and utilization are thereby intimately compartmentalized together to increase efficiency. This Saccharomyces cerevisiae (strain YJM789) (Baker's yeast) protein is Malate synthase 1.